Reading from the N-terminus, the 193-residue chain is Peptidyl-tRNA hydrolase (193 aa).

Tyr-14 provides a ligand contact to tRNA. Catalysis depends on His-19, which acts as the Proton acceptor. Residues Phe-64, Asn-66, and Asn-112 each coordinate tRNA.

Belongs to the PTH family. In terms of assembly, monomer.

Its subcellular location is the cytoplasm. It carries out the reaction an N-acyl-L-alpha-aminoacyl-tRNA + H2O = an N-acyl-L-amino acid + a tRNA + H(+). Hydrolyzes ribosome-free peptidyl-tRNAs (with 1 or more amino acids incorporated), which drop off the ribosome during protein synthesis, or as a result of ribosome stalling. Functionally, catalyzes the release of premature peptidyl moieties from peptidyl-tRNA molecules trapped in stalled 50S ribosomal subunits, and thus maintains levels of free tRNAs and 50S ribosomes. The sequence is that of Peptidyl-tRNA hydrolase from Bartonella bacilliformis (strain ATCC 35685 / KC583 / Herrer 020/F12,63).